Consider the following 138-residue polypeptide: Superoxide dismutase [Mn] (138 aa).

Mn(2+)-binding residues include His-1, His-49, Asp-133, and His-137.

This sequence belongs to the iron/manganese superoxide dismutase family. The cofactor is Mn(2+).

The catalysed reaction is 2 superoxide + 2 H(+) = H2O2 + O2. In terms of biological role, destroys superoxide anion radicals which are normally produced within the cells and which are toxic to biological systems. The sequence is that of Superoxide dismutase [Mn] (sodA) from Mycobacterium malmoense.